The chain runs to 459 residues: Probable 3-ketoacyl-CoA synthase 14 (459 aa).

The signal sequence occupies residues 1–25; that stretch reads MFIAMADFKLLLLILILLSLFELDL. Residues 32–52 form a helical membrane-spanning segment; it reads FFSPFPVKIGLLLISIFFYAY. An FAE domain is found at 52 to 334; sequence YSTTRSKPVY…FILFLVKSKL (283 aa). Active-site residues include histidine 268, histidine 352, histidine 356, histidine 385, and asparagine 389.

The protein belongs to the thiolase-like superfamily. Chalcone/stilbene synthases family. In terms of tissue distribution, expressed in siliques.

It is found in the membrane. It carries out the reaction a very-long-chain acyl-CoA + malonyl-CoA + H(+) = a very-long-chain 3-oxoacyl-CoA + CO2 + CoA. Its pathway is lipid metabolism; fatty acid biosynthesis. The protein is Probable 3-ketoacyl-CoA synthase 14 of Arabidopsis thaliana (Mouse-ear cress).